The sequence spans 77 residues: Small ribosomal subunit protein bS20 (77 aa).

The protein belongs to the bacterial ribosomal protein bS20 family.

In terms of biological role, binds directly to 16S ribosomal RNA. This chain is Small ribosomal subunit protein bS20, found in Lactococcus lactis subsp. cremoris (strain MG1363).